A 628-amino-acid polypeptide reads, in one-letter code: Translation factor GUF1, mitochondrial (628 aa).

The tr-type G domain maps to 27–209 (LPSRNFSIIA…AIISRIPPPS (183 aa)). Residues 36–43 (AHIDHGKS), 102–106 (DTPGH), and 156–159 (NKID) each bind GTP.

This sequence belongs to the TRAFAC class translation factor GTPase superfamily. Classic translation factor GTPase family. LepA subfamily.

Its subcellular location is the mitochondrion inner membrane. It catalyses the reaction GTP + H2O = GDP + phosphate + H(+). Its function is as follows. Promotes mitochondrial protein synthesis. May act as a fidelity factor of the translation reaction, by catalyzing a one-codon backward translocation of tRNAs on improperly translocated ribosomes. Binds to mitochondrial ribosomes in a GTP-dependent manner. In Laccaria bicolor (strain S238N-H82 / ATCC MYA-4686) (Bicoloured deceiver), this protein is Translation factor GUF1, mitochondrial.